The primary structure comprises 520 residues: GMP synthase [glutamine-hydrolyzing] (520 aa).

The Glutamine amidotransferase type-1 domain maps to Lys9 to Gln202. Residue Cys86 is the Nucleophile of the active site. Residues His176 and Glu178 contribute to the active site. One can recognise a GMPS ATP-PPase domain in the interval Trp203–Arg395. An ATP-binding site is contributed by Ser230–Ser236.

As to quaternary structure, homodimer.

The catalysed reaction is XMP + L-glutamine + ATP + H2O = GMP + L-glutamate + AMP + diphosphate + 2 H(+). The protein operates within purine metabolism; GMP biosynthesis; GMP from XMP (L-Gln route): step 1/1. Functionally, catalyzes the synthesis of GMP from XMP. The chain is GMP synthase [glutamine-hydrolyzing] from Syntrophotalea carbinolica (strain DSM 2380 / NBRC 103641 / GraBd1) (Pelobacter carbinolicus).